Here is a 414-residue protein sequence, read N- to C-terminus: 3-ketoacyl-CoA thiolase, peroxisomal (414 aa).

Residues 1–9 (MDRLNNLAT) constitute a peroxisome transit peptide. Residues 1–9 (MDRLNNLAT) form a PTS2-type peroxisomal targeting signal region. Catalysis depends on Cys115, which acts as the Acyl-thioester intermediate. Active-site proton acceptor residues include His370 and Cys400.

Belongs to the thiolase-like superfamily. Thiolase family. In terms of assembly, homodimer. Interacts (via PTS2-type peroxisomal targeting signal region) with PEX7; leading to its translocation into peroxisomes.

It localises to the peroxisome. The enzyme catalyses an acyl-CoA + acetyl-CoA = a 3-oxoacyl-CoA + CoA. Its pathway is lipid metabolism; fatty acid metabolism. Functionally, responsible for the thiolytic cleavage of straight chain 3-keto fatty acyl-CoAs (3-oxoacyl-CoAs). This chain is 3-ketoacyl-CoA thiolase, peroxisomal (POT1), found in Yarrowia lipolytica (strain CLIB 122 / E 150) (Yeast).